Reading from the N-terminus, the 438-residue chain is Zinc finger protein 641 (438 aa).

The segment at 1–53 (MQAEDRSQFGSAAEMLSEQTAALGTGWESMNVQLDGAEPQVERGSQEERPWRT) is disordered. Residues 17 to 32 (SEQTAALGTGWESMNV) are compositionally biased toward polar residues. The segment covering 40-51 (QVERGSQEERPW) has biased composition (basic and acidic residues). One can recognise a KRAB domain in the interval 109–181 (VTIKDVSLCF…DPQDLEERDI (73 aa)). The transactivation stretch occupies residues 171–265 (PDPQDLEERD…EMDSLLRPHT (95 aa)). S191 is modified (phosphoserine). 3 C2H2-type zinc fingers span residues 264-286 (HTCPQCGKQFVWGSHLARHQQTH), 292-314 (YSCLKCEKTFGRRHHLIRHQKTH), and 320-342 (SRCSECGKNFRCNSHLASHQRVH). The tract at residues 345-367 (GKSCKGQEVGESPGTRKRQRAPP) is disordered. 2 C2H2-type zinc fingers span residues 372–394 (HVCTECGKSFGRRHHLVRHWLTH) and 400–422 (FQCPRCEKSFGRKHHLDRHLLTH). Residues 418-438 (HLLTHQGQSPRNSWDRGTSVF) are disordered. The span at 422–438 (HQGQSPRNSWDRGTSVF) shows a compositional bias: polar residues. Residue S426 is modified to Phosphoserine.

It belongs to the krueppel C2H2-type zinc-finger protein family. Highly expressed in skeletal muscle, moderate expression in heart, liver, and pancreas, lower expression in placenta, no expression seen in brain, lung, and kidney.

The protein resides in the nucleus. Its function is as follows. Transcriptional activator. Activates transcriptional activities of SRE and AP-1. This is Zinc finger protein 641 (ZNF641) from Homo sapiens (Human).